A 95-amino-acid chain; its full sequence is Aspartyl/glutamyl-tRNA(Asn/Gln) amidotransferase subunit C (95 aa).

The protein belongs to the GatC family. In terms of assembly, heterotrimer of A, B and C subunits.

The enzyme catalyses L-glutamyl-tRNA(Gln) + L-glutamine + ATP + H2O = L-glutaminyl-tRNA(Gln) + L-glutamate + ADP + phosphate + H(+). It carries out the reaction L-aspartyl-tRNA(Asn) + L-glutamine + ATP + H2O = L-asparaginyl-tRNA(Asn) + L-glutamate + ADP + phosphate + 2 H(+). Its function is as follows. Allows the formation of correctly charged Asn-tRNA(Asn) or Gln-tRNA(Gln) through the transamidation of misacylated Asp-tRNA(Asn) or Glu-tRNA(Gln) in organisms which lack either or both of asparaginyl-tRNA or glutaminyl-tRNA synthetases. The reaction takes place in the presence of glutamine and ATP through an activated phospho-Asp-tRNA(Asn) or phospho-Glu-tRNA(Gln). In Maricaulis maris (strain MCS10) (Caulobacter maris), this protein is Aspartyl/glutamyl-tRNA(Asn/Gln) amidotransferase subunit C.